The sequence spans 346 residues: Biotin synthase (346 aa).

Residues 38–256 (QQVQVSTLLS…IAVARIMMPT (219 aa)) enclose the Radical SAM core domain. [4Fe-4S] cluster-binding residues include C53, C57, and C60. [2Fe-2S] cluster contacts are provided by C97, C128, C188, and R260.

Belongs to the radical SAM superfamily. Biotin synthase family. Homodimer. Requires [4Fe-4S] cluster as cofactor. [2Fe-2S] cluster serves as cofactor.

It catalyses the reaction (4R,5S)-dethiobiotin + (sulfur carrier)-SH + 2 reduced [2Fe-2S]-[ferredoxin] + 2 S-adenosyl-L-methionine = (sulfur carrier)-H + biotin + 2 5'-deoxyadenosine + 2 L-methionine + 2 oxidized [2Fe-2S]-[ferredoxin]. Its pathway is cofactor biosynthesis; biotin biosynthesis; biotin from 7,8-diaminononanoate: step 2/2. In terms of biological role, catalyzes the conversion of dethiobiotin (DTB) to biotin by the insertion of a sulfur atom into dethiobiotin via a radical-based mechanism. The protein is Biotin synthase of Salmonella agona (strain SL483).